Reading from the N-terminus, the 195-residue chain is Probable nicotinate-nucleotide adenylyltransferase (195 aa).

This sequence belongs to the NadD family.

The enzyme catalyses nicotinate beta-D-ribonucleotide + ATP + H(+) = deamido-NAD(+) + diphosphate. The protein operates within cofactor biosynthesis; NAD(+) biosynthesis; deamido-NAD(+) from nicotinate D-ribonucleotide: step 1/1. Functionally, catalyzes the reversible adenylation of nicotinate mononucleotide (NaMN) to nicotinic acid adenine dinucleotide (NaAD). The protein is Probable nicotinate-nucleotide adenylyltransferase of Salinibacter ruber (strain DSM 13855 / M31).